A 164-amino-acid polypeptide reads, in one-letter code: Phosphopantetheine adenylyltransferase (164 aa).

Residue Ser-9 coordinates substrate. ATP-binding positions include 9-10 (SF) and His-17. Substrate-binding residues include Lys-41, Leu-73, and Lys-87. ATP-binding positions include 88–90 (GLR), Glu-98, and 122–128 (YSYLSSS).

This sequence belongs to the bacterial CoaD family. Homohexamer. The cofactor is Mg(2+).

Its subcellular location is the cytoplasm. It catalyses the reaction (R)-4'-phosphopantetheine + ATP + H(+) = 3'-dephospho-CoA + diphosphate. It participates in cofactor biosynthesis; coenzyme A biosynthesis; CoA from (R)-pantothenate: step 4/5. Its function is as follows. Reversibly transfers an adenylyl group from ATP to 4'-phosphopantetheine, yielding dephospho-CoA (dPCoA) and pyrophosphate. This is Phosphopantetheine adenylyltransferase from Rhodococcus erythropolis (strain PR4 / NBRC 100887).